A 468-amino-acid chain; its full sequence is Glutathione reductase (468 aa).

2 residues coordinate FAD: S17 and G18. S17 contacts glutathione. A glutathione-binding site is contributed by R24. FAD-binding residues include E38, T45, C46, and K54. Cysteines 46 and 51 form a disulfide. Residue Y103 participates in glutathione binding. A119 serves as a coordination point for FAD. 6 residues coordinate NADP(+): A185, I188, E191, R208, R214, and G276. D317 is a binding site for FAD. E323 contributes to the NADP(+) binding site. Residue T325 participates in FAD binding. A glutathione-binding site is contributed by R333. V358 lines the NADP(+) pocket. Residue K410 participates in glutathione binding. Position 457 (H457) interacts with FAD. The active-site Proton acceptor is the H457.

The protein belongs to the class-I pyridine nucleotide-disulfide oxidoreductase family. In terms of assembly, homodimer. The cofactor is FAD.

It localises to the cytoplasm. It is found in the mitochondrion. It carries out the reaction 2 glutathione + NADP(+) = glutathione disulfide + NADPH + H(+). In terms of biological role, catalyzes the reduction of glutathione disulfide (GSSG) to reduced glutathione (GSH). Constitutes the major mechanism to maintain a high GSH:GSSG ratio in the cytosol. The protein is Glutathione reductase (gtr-1) of Neurospora crassa (strain ATCC 24698 / 74-OR23-1A / CBS 708.71 / DSM 1257 / FGSC 987).